Here is a 108-residue protein sequence, read N- to C-terminus: UPF0060 membrane protein Msil_1658 (108 aa).

Transmembrane regions (helical) follow at residues 5–25 (LVYVAAALAEIAGCFSFWAWL), 31–51 (SLWLIPGTASLLLFAWLLTLI), 62–82 (AYGGVYVTVSLLWLWAMEGVW), and 88–108 (LGGATLCLIGAAIIILAPRPA).

It belongs to the UPF0060 family.

It is found in the cell inner membrane. The protein is UPF0060 membrane protein Msil_1658 of Methylocella silvestris (strain DSM 15510 / CIP 108128 / LMG 27833 / NCIMB 13906 / BL2).